The sequence spans 122 residues: UPF0102 protein Rleg2_4331 (122 aa).

This sequence belongs to the UPF0102 family.

The chain is UPF0102 protein Rleg2_4331 from Rhizobium leguminosarum bv. trifolii (strain WSM2304).